The sequence spans 354 residues: Uroporphyrinogen decarboxylase (354 aa).

Residues 27–31 (RQAGR), Asp77, Tyr154, Thr209, and His327 each bind substrate.

This sequence belongs to the uroporphyrinogen decarboxylase family. Homodimer.

Its subcellular location is the cytoplasm. The enzyme catalyses uroporphyrinogen III + 4 H(+) = coproporphyrinogen III + 4 CO2. Its pathway is porphyrin-containing compound metabolism; protoporphyrin-IX biosynthesis; coproporphyrinogen-III from 5-aminolevulinate: step 4/4. Its function is as follows. Catalyzes the decarboxylation of four acetate groups of uroporphyrinogen-III to yield coproporphyrinogen-III. The polypeptide is Uroporphyrinogen decarboxylase (Psychromonas ingrahamii (strain DSM 17664 / CCUG 51855 / 37)).